Reading from the N-terminus, the 152-residue chain is Putative aluminum-activated malate transporter 11 (152 aa).

2 consecutive transmembrane segments (helical) span residues 48 to 68 and 78 to 98; these read VIHAFKVGHSLTLVSLLYFME and AIWAVMTVVAVLLEFFAVEGL.

It belongs to the aromatic acid exporter (TC 2.A.85) family.

The protein resides in the membrane. Functionally, malate transporter. The chain is Putative aluminum-activated malate transporter 11 (ALMT11) from Arabidopsis thaliana (Mouse-ear cress).